We begin with the raw amino-acid sequence, 1188 residues long: Oxysterol-binding protein homolog 1 (1188 aa).

ANK repeat units lie at residues 51-80 (VLHLMLHYAVQVAPMAVIKEIVHHWVSTTN), 96-125 (NGNTPLHIAAYQSRGDIVAFLLDQPTINDC), and 196-225 (TGDTVLHEFVKKRDVIMCRWLLEHGADPFK). The PH domain maps to 330 to 379 (MSSCSLHLDSSEKLKFEIIGGNNGVIRWHLKGNHPIETNRWVWAIQGAIR). Position 394 is a phosphoserine (S394). 2 disordered regions span residues 415-546 (ATSK…GDED) and 661-692 (QKKLNNQPQVETEANEESDDANSMIKGSQEST). A compositionally biased stretch (polar residues) spans 424–433 (PHLSKSTLTQ). The segment covering 443–462 (TNNNNNKSNNDYDDNNNNNN) has biased composition (low complexity). Over residues 463-473 (NDDDDYDDDDE) the composition is skewed to acidic residues. Residues S490 and S500 each carry the phosphoserine modification. The segment covering 514–529 (PSDDEGYSEDDSDDDG) has biased composition (acidic residues). Phosphoserine occurs at positions 678, 683, and 691. T692 and T694 each carry phosphothreonine. Phosphoserine occurs at positions 708 and 712. The FFAT motif lies at 716-722 (EFFDAEE). Residues 721–755 (EEAASDKKANDSEDLTTNKETPANAKPQEEAPEDE) are disordered. The tract at residues 800-1174 (LWSVLKSMVG…YWKFNGEYWN (375 aa)) is OSBP-related domain (ORD). Ergosterol is bound by residues D834 and K962.

This sequence belongs to the OSBP family. In terms of assembly, interacts with NVJ1. Interacts with the AAA ATPase AFG2; regulates OSH1 membrane association. AFG2 is required for membrane dissociation of OSH1. Interacts with SCS2.

The protein localises to the golgi apparatus membrane. It localises to the nucleus outer membrane. It is found in the endoplasmic reticulum membrane. Its subcellular location is the vacuole membrane. Lipid transport protein (LTP) involved in non-vesicular transfer of lipids between membranes. Functions in phosphoinositide-coupled directional transport of various lipids by carrying the lipid molecule in a hydrophobic pocket and transferring it between membranes through the cytosol. Involved in maintenance of intracellular sterol distribution and homeostasis. Involved in non-vesicular transport of ergosterol and PI(4)P at the NVJ. Binds sterol and PI4P in a mutually exclusive manner. May be involved in formation of PMN vesicles by altering the membrane lipid composition. The chain is Oxysterol-binding protein homolog 1 from Saccharomyces cerevisiae (strain ATCC 204508 / S288c) (Baker's yeast).